Reading from the N-terminus, the 320-residue chain is Ribose-phosphate pyrophosphokinase 1 (320 aa).

ATP-binding positions include 39–41 and 98–99; these read DGE and RQ. Mg(2+) contacts are provided by H132 and D173. Residue K196 is part of the active site. D-ribose 5-phosphate-binding positions include R198, D224, and 228–232; that span reads DTAGT.

It belongs to the ribose-phosphate pyrophosphokinase family. Class I subfamily. As to quaternary structure, homohexamer. Mg(2+) is required as a cofactor.

The protein resides in the cytoplasm. The enzyme catalyses D-ribose 5-phosphate + ATP = 5-phospho-alpha-D-ribose 1-diphosphate + AMP + H(+). It functions in the pathway metabolic intermediate biosynthesis; 5-phospho-alpha-D-ribose 1-diphosphate biosynthesis; 5-phospho-alpha-D-ribose 1-diphosphate from D-ribose 5-phosphate (route I): step 1/1. Functionally, involved in the biosynthesis of the central metabolite phospho-alpha-D-ribosyl-1-pyrophosphate (PRPP) via the transfer of pyrophosphoryl group from ATP to 1-hydroxyl of ribose-5-phosphate (Rib-5-P). The sequence is that of Ribose-phosphate pyrophosphokinase 1 from Streptococcus pyogenes serotype M1.